A 185-amino-acid polypeptide reads, in one-letter code: Probable host range protein 2 (185 aa).

Belongs to the poxviridae C7 protein family.

Its function is as follows. Plays a role for multiplication of the virus in different cell types. The sequence is that of Probable host range protein 2 from Swinepox virus (strain Kasza) (SWPV).